Here is a 365-residue protein sequence, read N- to C-terminus: Zinc finger MYND domain-containing protein 12 (365 aa).

Zn(2+) is bound by residues C17, C20, C28, C31, C37, H41, H50, and C54. The segment at 17–54 (CEVCEAPAERVCAACTVTYYCGVVHQKADWDSIHEKIC) adopts an MYND-type; atypical zinc-finger fold. 2 TPR repeats span residues 172-205 (SLLH…ASCA) and 214-247 (SGGY…WHAY).

As to expression, expressed predominantly in the testis.

It localises to the cell projection. The protein localises to the cilium. It is found in the flagellum. Functionally, required for sperm flagellum function and male fertility. The sequence is that of Zinc finger MYND domain-containing protein 12 (ZMYND12) from Homo sapiens (Human).